The chain runs to 147 residues: MPTINQLVRKPRKSKIEKSDSPALNIGYNSHKKVQTKMAAPQKRGVATRVGTMTPKKPNSALRKFARVRLSNLIEVTAYIPGIGHNLQEHSVVLIRGGRVKDLPGVRYHIVRGALDTAGVADRNKAVLNTGRNVQKDNRRGIRENES.

The disordered stretch occupies residues 1 to 22 (MPTINQLVRKPRKSKIEKSDSP). Aspartate 102 carries the 3-methylthioaspartic acid modification.

It belongs to the universal ribosomal protein uS12 family. As to quaternary structure, part of the 30S ribosomal subunit. Contacts proteins S8 and S17. May interact with IF1 in the 30S initiation complex.

Its function is as follows. With S4 and S5 plays an important role in translational accuracy. In terms of biological role, interacts with and stabilizes bases of the 16S rRNA that are involved in tRNA selection in the A site and with the mRNA backbone. Located at the interface of the 30S and 50S subunits, it traverses the body of the 30S subunit contacting proteins on the other side and probably holding the rRNA structure together. The combined cluster of proteins S8, S12 and S17 appears to hold together the shoulder and platform of the 30S subunit. The sequence is that of Small ribosomal subunit protein uS12 from Streptococcus pyogenes serotype M12 (strain MGAS2096).